Here is a 366-residue protein sequence, read N- to C-terminus: Flagellar P-ring protein (366 aa).

The first 20 residues, 1-20 (MVIKFLSALILLLVTTAAQA), serve as a signal peptide directing secretion.

It belongs to the FlgI family. The basal body constitutes a major portion of the flagellar organelle and consists of four rings (L,P,S, and M) mounted on a central rod.

Its subcellular location is the periplasm. It is found in the bacterial flagellum basal body. Its function is as follows. Assembles around the rod to form the L-ring and probably protects the motor/basal body from shearing forces during rotation. This chain is Flagellar P-ring protein, found in Escherichia coli O1:K1 / APEC.